Here is a 185-residue protein sequence, read N- to C-terminus: Small ribosomal subunit protein uS5 (185 aa).

An S5 DRBM domain is found at 18 to 81; the sequence is FVDKLVHINR…ESAKRALIRV (64 aa).

Belongs to the universal ribosomal protein uS5 family. In terms of assembly, part of the 30S ribosomal subunit. Contacts proteins S4 and S8.

With S4 and S12 plays an important role in translational accuracy. Functionally, located at the back of the 30S subunit body where it stabilizes the conformation of the head with respect to the body. The polypeptide is Small ribosomal subunit protein uS5 (Azorhizobium caulinodans (strain ATCC 43989 / DSM 5975 / JCM 20966 / LMG 6465 / NBRC 14845 / NCIMB 13405 / ORS 571)).